The chain runs to 395 residues: Succinyl-diaminopimelate desuccinylase (395 aa).

Residue His74 participates in Zn(2+) binding. Asp76 is an active-site residue. Asp107 serves as a coordination point for Zn(2+). The active-site Proton acceptor is the Glu141. Positions 142, 170, and 368 each coordinate Zn(2+).

Belongs to the peptidase M20A family. DapE subfamily. Homodimer. Requires Zn(2+) as cofactor. The cofactor is Co(2+).

It carries out the reaction N-succinyl-(2S,6S)-2,6-diaminopimelate + H2O = (2S,6S)-2,6-diaminopimelate + succinate. It participates in amino-acid biosynthesis; L-lysine biosynthesis via DAP pathway; LL-2,6-diaminopimelate from (S)-tetrahydrodipicolinate (succinylase route): step 3/3. Functionally, catalyzes the hydrolysis of N-succinyl-L,L-diaminopimelic acid (SDAP), forming succinate and LL-2,6-diaminopimelate (DAP), an intermediate involved in the bacterial biosynthesis of lysine and meso-diaminopimelic acid, an essential component of bacterial cell walls. The polypeptide is Succinyl-diaminopimelate desuccinylase (Brucella anthropi (strain ATCC 49188 / DSM 6882 / CCUG 24695 / JCM 21032 / LMG 3331 / NBRC 15819 / NCTC 12168 / Alc 37) (Ochrobactrum anthropi)).